Here is a 501-residue protein sequence, read N- to C-terminus: Cytochrome P450 monooxygenase ccsG (501 aa).

The signal sequence occupies residues 1-28 (MMITLFTLAVVSIGFFLWWLLTVQPAVT). N-linked (GlcNAc...) asparagine glycosylation is found at N115 and N154. C443 contributes to the heme binding site.

Belongs to the cytochrome P450 family. Heme serves as cofactor.

Its pathway is mycotoxin biosynthesis. Functionally, cytochrome P450 monooxygenase; part of the gene cluster that mediates the biosynthesis of a family of the mycotoxins cytochalasins E and K. The hybrid PKS-NRPS synthetase ccsA and the enoyl reductase ccsC are responsible for fusion of phenylalanine with an octaketide backbone and subsequent release of the stable tetramic acid precursor. The polyketide synthase module (PKS) of the PKS-NRPS ccsA is responsible for the synthesis of the octaketide backbone. The downstream nonribosomal peptide synthetase (NRPS) amidates the carboxyl end of the octaketide with a phenylalanine. A reductase-like domain (R) at the C-terminus catalyzes the reductive release of the polyketide-amino acid intermediate. Because ccsA lacks a designated enoylreductase (ER) domain, the required activity is provided the enoyl reductase ccsC. Upon formation of the 11-membered carbocycle-fused perhydroisoindolone intermediate, a number of oxidative steps are required to afford the final cytochalasin E and K, including two hydroxylations at C17 and C18, one alcohol oxidation at C17, one epoxidation at C6 and C7 and two Baeyer-Villiger oxidations. The oxidative modification at C17, C18 and the C6-C7 epoxidation are likely to be catalyzed by the two cytochrome P450 oxygenases ccsD and ccsG. CcsD may be responsible for the epoxidation of the C6-C7 double bond. CcsG may be responsible for the successive oxidative modifications at C17 and C18. The double Baeyer-Villiger oxidations of ketocytochalasin to precytochalasin and cytochalasin Z(16) are among the final steps leading to cytochalasin E and K and are catalyzed by ccsB. The first oxygen insertion step follows that of the classic BVMO mechanism, generating the ester precytochalasin. Release of precytochalasin into an aqueous environment can generate the shunt product iso-precytochalasin through spontaneous isomerization. Alternatively, precytochalasin can undergo further oxidation by ccsB to yield the in-line carbonate-containing cytochalasin Z(16). Cytochalasin Z(16) is a precursor to cytochalasin E and cytochalasin K, whereas iso-precytochalasin is a precursor to cytochalasin Z(17) and rosellichalasin. The hydrolyase ccsE may catalyze hydrolysis of epoxide bond in cytochalasin E to afford cytochalasin K. The function of ccsF has not been assigned but it may play a role in post-PKS-NRPS biosynthetic step, resistance or transport of cytochalasins and related PKS-NRPS products. This chain is Cytochrome P450 monooxygenase ccsG, found in Aspergillus clavatus (strain ATCC 1007 / CBS 513.65 / DSM 816 / NCTC 3887 / NRRL 1 / QM 1276 / 107).